The following is a 325-amino-acid chain: Lactonase drp35 (325 aa).

Ca(2+)-binding residues include Glu46, Ser108, Gly110, Glu128, Thr131, Tyr133, Asp136, Asn183, Asp234, and Ser235. The Proton donor role is filled by Asp234.

Belongs to the SMP-30/CGR1 family. It depends on Ca(2+) as a cofactor.

The protein localises to the cytoplasm. In terms of biological role, exhibits lactonase activity. Acts in cells with perturbed membrane integrity and is possibly related to the membrane homeostasis. The protein is Lactonase drp35 (drp35) of Staphylococcus haemolyticus (strain JCSC1435).